The chain runs to 69 residues: Protein SlyX homolog (69 aa).

This sequence belongs to the SlyX family.

The polypeptide is Protein SlyX homolog (Pseudomonas paraeruginosa (strain DSM 24068 / PA7) (Pseudomonas aeruginosa (strain PA7))).